The chain runs to 130 residues: Fluoride-specific ion channel FluC (130 aa).

4 helical membrane passes run Phe10–Phe30, Gly41–Met61, Leu72–Glu89, and Leu105–Leu125. Residues Gly80 and Thr83 each coordinate Na(+).

Belongs to the fluoride channel Fluc/FEX (TC 1.A.43) family.

The protein localises to the cell inner membrane. The enzyme catalyses fluoride(in) = fluoride(out). Na(+) is not transported, but it plays an essential structural role and its presence is essential for fluoride channel function. Its function is as follows. Fluoride-specific ion channel. Important for reducing fluoride concentration in the cell, thus reducing its toxicity. This chain is Fluoride-specific ion channel FluC, found in Synechococcus sp. (strain JA-2-3B'a(2-13)) (Cyanobacteria bacterium Yellowstone B-Prime).